A 143-amino-acid polypeptide reads, in one-letter code: Nitrosuccinic acid decarboxylase npaB (143 aa).

It belongs to the carboxymuconolactone decarboxylase family. The cofactor is Mg(2+).

It functions in the pathway mycotoxin biosynthesis. Functionally, nitrosuccinic acid decarboxylase; part of the gene cluster that mediates the biosynthesis of the deadly neurotoxic nitroalkane 3-nitropropanoic acid (3-NPA) that acts as an antimetabolite of succinate and irreversibly inhibits succinate dehydrogenase and disrupts mitochondrial oxidative phosphorylation. NpaB facilitates decarboxylation of nitrosuccinic acid produced by the nitrosuccinic acid synthase npaA to yield the final product of the cluster, the lethal mycotoxin 3-NPA. In Metarhizium robertsii (strain ARSEF 23 / ATCC MYA-3075) (Metarhizium anisopliae (strain ARSEF 23)), this protein is Nitrosuccinic acid decarboxylase npaB.